We begin with the raw amino-acid sequence, 436 residues long: Ribulose bisphosphate carboxylase large chain (436 aa).

Residues Asn104 and Thr154 each coordinate substrate. Lys156 (proton acceptor) is an active-site residue. Lys158 serves as a coordination point for substrate. Mg(2+)-binding residues include Lys182, Asp184, and Glu185. Lys182 bears the N6-carboxylysine mark. His275 functions as the Proton acceptor in the catalytic mechanism. Residues Arg276, His308, and Ser360 each coordinate substrate.

The protein belongs to the RuBisCO large chain family. Type I subfamily. In terms of assembly, heterohexadecamer of 8 large chains and 8 small chains. Requires Mg(2+) as cofactor.

It is found in the plastid. It localises to the chloroplast. The enzyme catalyses 2 (2R)-3-phosphoglycerate + 2 H(+) = D-ribulose 1,5-bisphosphate + CO2 + H2O. It catalyses the reaction D-ribulose 1,5-bisphosphate + O2 = 2-phosphoglycolate + (2R)-3-phosphoglycerate + 2 H(+). In terms of biological role, ruBisCO catalyzes two reactions: the carboxylation of D-ribulose 1,5-bisphosphate, the primary event in carbon dioxide fixation, as well as the oxidative fragmentation of the pentose substrate in the photorespiration process. Both reactions occur simultaneously and in competition at the same active site. The chain is Ribulose bisphosphate carboxylase large chain from Euglena myxocylindracea.